We begin with the raw amino-acid sequence, 254 residues long: Large ribosomal subunit protein uL15m (254 aa).

The N-terminal 78 residues, 1 to 78 (MFNILSRVCR…GSGQRRGRRI (78 aa)), are a transit peptide targeting the mitochondrion. The disordered stretch occupies residues 44–104 (NYQSKKRVGR…KVGHSTGHLK (61 aa)). Positions 64–79 (GRGHKGSGQRRGRRIK) are enriched in basic residues.

Belongs to the universal ribosomal protein uL15 family. Component of the mitochondrial large ribosomal subunit (mt-LSU). Mature yeast 74S mitochondrial ribosomes consist of a small (37S) and a large (54S) subunit. The 37S small subunit contains a 15S ribosomal RNA (15S mt-rRNA) and at least 32 different proteins. The 54S large subunit contains a 21S rRNA (21S mt-rRNA) and at least 45 different proteins.

It localises to the mitochondrion. Its function is as follows. Component of the mitochondrial ribosome (mitoribosome), a dedicated translation machinery responsible for the synthesis of mitochondrial genome-encoded proteins, including at least some of the essential transmembrane subunits of the mitochondrial respiratory chain. The mitoribosomes are attached to the mitochondrial inner membrane and translation products are cotranslationally integrated into the membrane. This Schizosaccharomyces pombe (strain 972 / ATCC 24843) (Fission yeast) protein is Large ribosomal subunit protein uL15m (mrpl10).